Here is a 59-residue protein sequence, read N- to C-terminus: Light-harvesting protein B-800-850 alpha chain E (59 aa).

Residues 1-11 are Cytoplasmic-facing; it reads MNQGRIWTVVK. A helical transmembrane segment spans residues 12 to 35; sequence PTVGLPLLLGSVTVIAILVHFAVL. Residue His31 participates in a bacteriochlorophyll binding. Over 36–59 the chain is Periplasmic; sequence SNTTWFSKYWNGKAAAIESSVSIG.

The protein belongs to the antenna complex alpha subunit family. The core complex is formed by different alpha and beta chains, binding bacteriochlorophyll molecules, and arranged most probably in tetrameric structures disposed around the reaction center. The non-pigmented gamma chains may constitute additional components.

The protein resides in the cell inner membrane. Its function is as follows. Antenna complexes are light-harvesting systems, which transfer the excitation energy to the reaction centers. The protein is Light-harvesting protein B-800-850 alpha chain E (pucAE) of Rhodopseudomonas palustris (strain ATCC BAA-98 / CGA009).